The sequence spans 480 residues: uncharacterized protein (480 aa).

A helical transmembrane segment spans residues 7 to 28 (HVISIFETFGAYFINIFYNFLY). N73 and N195 each carry an N-linked (GlcNAc...) asparagine; by host glycan. Positions 195–235 (NRSLLYQIEELTSEKKSLLAELSTLRKKYEKRQSEYRRLVQ) form a coiled coil. The segment at 297–332 (ELTSKSPSNYPVPQSRTIVSKPSDNYPVPQSRSSKI) is disordered. Polar residues predominate over residues 301-329 (KSPSNYPVPQSRTIVSKPSDNYPVPQSRS). N-linked (GlcNAc...) asparagine; by host glycosylation occurs at N455.

Belongs to the asfivirus B475L family.

The protein resides in the host membrane. This is an uncharacterized protein from African swine fever virus (isolate Pig/Kenya/KEN-50/1950) (ASFV).